Here is a 267-residue protein sequence, read N- to C-terminus: Matrilysin (267 aa).

A signal peptide spans M1 to A17. A propeptide spans L18–E94 (activation peptide). The Cysteine switch motif lies at P85–V92. C87 serves as a coordination point for Zn(2+). D153 serves as a coordination point for Ca(2+). Residues H163 and D165 each coordinate Zn(2+). D170, G171, G173, and T175 together coordinate Ca(2+). Residue H178 participates in Zn(2+) binding. Residues G185, G187, and D189 each contribute to the Ca(2+) site. Residue H191 participates in Zn(2+) binding. Ca(2+) contacts are provided by D193 and E196. H214 lines the Zn(2+) pocket. The active site involves E215. Residues H218 and H224 each coordinate Zn(2+).

This sequence belongs to the peptidase M10A family. Ca(2+) serves as cofactor. It depends on Zn(2+) as a cofactor.

Its subcellular location is the secreted. The protein localises to the extracellular space. It localises to the extracellular matrix. It catalyses the reaction Cleavage of 14-Ala-|-Leu-15 and 16-Tyr-|-Leu-17 in B chain of insulin. No action on collagen types I, II, IV, V. Cleaves gelatin chain alpha2(I) &gt; alpha1(I).. Degrades casein, gelatins of types I, III, IV, and V, and fibronectin. Activates procollagenase. The chain is Matrilysin (MMP7) from Homo sapiens (Human).